The primary structure comprises 336 residues: Probable deoxyhypusine synthase (336 aa).

The active-site Nucleophile is K308.

This sequence belongs to the deoxyhypusine synthase family. NAD(+) serves as cofactor.

The catalysed reaction is [eIF5A protein]-L-lysine + spermidine = [eIF5A protein]-deoxyhypusine + propane-1,3-diamine. It participates in protein modification; eIF5A hypusination. Functionally, catalyzes the NAD-dependent oxidative cleavage of spermidine and the subsequent transfer of the butylamine moiety of spermidine to the epsilon-amino group of a specific lysine residue of the eIF-5A precursor protein to form the intermediate deoxyhypusine residue. This is Probable deoxyhypusine synthase from Pyrococcus furiosus (strain ATCC 43587 / DSM 3638 / JCM 8422 / Vc1).